The sequence spans 549 residues: Probable acyl-activating enzyme 10 (549 aa).

The protein belongs to the ATP-dependent AMP-binding enzyme family. As to expression, expressed at low levels in roots.

Functionally, may act as an acid--thiol ligase that activates carboxylic acids by forming acyl-CoAs. The polypeptide is Probable acyl-activating enzyme 10 (AEE10) (Arabidopsis thaliana (Mouse-ear cress)).